The chain runs to 80 residues: uncharacterized protein (80 aa).

Positions 1-20 (MVAADHRALGSNKSYPASQT) are cleaved as a signal peptide. Residues 1–21 (MVAADHRALGSNKSYPASQTA) form a disordered region. Residues 11–21 (SNKSYPASQTA) are compositionally biased toward polar residues.

This is an uncharacterized protein from Mycobacterium tuberculosis (strain CDC 1551 / Oshkosh).